The chain runs to 121 residues: Small ribosomal subunit protein uS12 (121 aa).

A disordered region spans residues 1–25 (MPTINQLVRKNRKQKKSQSKSPVLE). A compositionally biased stretch (basic residues) spans 9-18 (RKNRKQKKSQ). Residue Asp89 is modified to 3-methylthioaspartic acid.

The protein belongs to the universal ribosomal protein uS12 family. As to quaternary structure, part of the 30S ribosomal subunit. Contacts proteins S8 and S17. May interact with IF1 in the 30S initiation complex.

Its function is as follows. With S4 and S5 plays an important role in translational accuracy. Interacts with and stabilizes bases of the 16S rRNA that are involved in tRNA selection in the A site and with the mRNA backbone. Located at the interface of the 30S and 50S subunits, it traverses the body of the 30S subunit contacting proteins on the other side and probably holding the rRNA structure together. The combined cluster of proteins S8, S12 and S17 appears to hold together the shoulder and platform of the 30S subunit. The chain is Small ribosomal subunit protein uS12 from Rhodopirellula baltica (strain DSM 10527 / NCIMB 13988 / SH1).